Here is a 428-residue protein sequence, read N- to C-terminus: Cholecystokinin receptor type A (428 aa).

Residues M1–P41 lie on the Extracellular side of the membrane. N10 and N24 each carry an N-linked (GlcNAc...) asparagine glycan. C18 and C29 form a disulfide bridge. Residues A42–I67 traverse the membrane as a helical segment. The Cytoplasmic segment spans residues R68–N77. The chain crosses the membrane as a helical span at residues I78–L104. At K105–K115 the chain is on the extracellular side. Residues C114 and C196 are joined by a disulfide bond. Residues T116–L137 traverse the membrane as a helical segment. Residues E138–H157 lie on the Cytoplasmic side of the membrane. Residues A158–I178 traverse the membrane as a helical segment. Residues Y179–H210 are Extracellular-facing. N190 carries an N-linked (GlcNAc...) asparagine glycan. Residues T211–L234 form a helical membrane-spanning segment. At E235–R313 the chain is on the cytoplasmic side. The disordered stretch occupies residues K248–Q272. The helical transmembrane segment at M314–A334 threads the bilayer. Topologically, residues W335–G349 are extracellular. A helical transmembrane segment spans residues T350 to M373. Residues N374–Q428 lie on the Cytoplasmic side of the membrane. The S-palmitoyl cysteine moiety is linked to residue C387. The disordered stretch occupies residues P394 to Q428. Over residues A411–S422 the composition is skewed to polar residues.

Belongs to the G-protein coupled receptor 1 family.

The protein localises to the cell membrane. Functionally, receptor for cholecystokinin. Mediates pancreatic growth and enzyme secretion, smooth muscle contraction of the gall bladder and stomach. Has a 1000-fold higher affinity for CCK rather than for gastrin. It modulates feeding and dopamine-induced behavior in the central and peripheral nervous system. This receptor mediates its action by association with G proteins that activate a phosphatidylinositol-calcium second messenger system. The polypeptide is Cholecystokinin receptor type A (CCKAR) (Homo sapiens (Human)).